The primary structure comprises 456 residues: Argininosuccinate lyase (456 aa).

This sequence belongs to the lyase 1 family. Argininosuccinate lyase subfamily.

The protein localises to the cytoplasm. It carries out the reaction 2-(N(omega)-L-arginino)succinate = fumarate + L-arginine. It participates in amino-acid biosynthesis; L-arginine biosynthesis; L-arginine from L-ornithine and carbamoyl phosphate: step 3/3. The sequence is that of Argininosuccinate lyase from Listeria monocytogenes serotype 4b (strain CLIP80459).